The primary structure comprises 462 residues: tRNA pseudouridine(32) synthase, mitochondrial (462 aa).

Residues 1 to 24 (MQRNNRLRNLFTVPVIMARQLKRN) constitute a mitochondrion transit peptide. One can recognise an S4 RNA-binding domain in the interval 127–188 (KLVDVFISEF…HEPPVTSRPI (62 aa)). Asp238 is an active-site residue.

This sequence belongs to the pseudouridine synthase RluA family.

It is found in the mitochondrion. The enzyme catalyses uridine(32) in tRNA = pseudouridine(32) in tRNA. In terms of biological role, responsible for synthesis of pseudouridine from uracil-32 in mitochondrial transfer RNAs. This chain is tRNA pseudouridine(32) synthase, mitochondrial (PUS9), found in Saccharomyces cerevisiae (strain ATCC 204508 / S288c) (Baker's yeast).